The chain runs to 124 residues: uncharacterized protein (124 aa).

The segment at 1–28 (MGTSLRSQSFREPRPSYGRLHESQGRSL) is disordered. The segment covering 9-28 (SFREPRPSYGRLHESQGRSL) has biased composition (basic and acidic residues).

This is an uncharacterized protein from Mus musculus (Mouse).